The following is a 208-amino-acid chain: Thymidylate kinase (208 aa).

An ATP-binding site is contributed by 10-17 (GPEGSGKT).

It belongs to the thymidylate kinase family.

It carries out the reaction dTMP + ATP = dTDP + ADP. Functionally, phosphorylation of dTMP to form dTDP in both de novo and salvage pathways of dTTP synthesis. The polypeptide is Thymidylate kinase (Bacillus cereus (strain B4264)).